A 615-amino-acid chain; its full sequence is Zinc finger protein 653 (615 aa).

Disordered stretches follow at residues 1–46 (MAER…ARRR), 93–115 (RSGRHGKPWEQVPKKPKRKKRRR), and 174–235 (PLSD…SGLI). Low complexity predominate over residues 7–25 (EPGAEAEAGAGGEAAAEEG). Positions 106–115 (KKPKRKKRRR) are enriched in basic residues. Low complexity-rich tracts occupy residues 192 to 203 (GSSDSSSSGSSS) and 212 to 232 (QPAKASAAAAALTPASPTGSS). 5 consecutive C2H2-type zinc fingers follow at residues 467-492 (FHCPYEGCSQVYVALSSFQNHVNLVH), 498-522 (KVCPHPGCGKKFYLSNHLRRHMIIH), 528-550 (FTCETCGKSFKRKNHLEVHRRTH), 556-578 (LQCEICGYQCRQRASLNWHMKKH), and 586-609 (FTCDRCGKRFEKLDSVKFHTLKSH).

It belongs to the krueppel C2H2-type zinc-finger protein family. Interacts with NR5A1. Highly expressed in testis and spleen. Moderately expressed in lung, adrenal gland, uterus, and ovary. Very low expression in pancreas, heart, skeletal muscle, adipose tissue, kidney, and liver.

Its subcellular location is the nucleus. Its function is as follows. Transcriptional repressor. May repress NR5A1, PPARG, NR1H3, NR4A2, ESR1 and NR3C1 transcriptional activity. This chain is Zinc finger protein 653 (Znf653), found in Mus musculus (Mouse).